Here is a 201-residue protein sequence, read N- to C-terminus: Probable chemoreceptor glutamine deamidase CheD (201 aa).

It belongs to the CheD family.

The enzyme catalyses L-glutaminyl-[protein] + H2O = L-glutamyl-[protein] + NH4(+). In terms of biological role, probably deamidates glutamine residues to glutamate on methyl-accepting chemotaxis receptors (MCPs), playing an important role in chemotaxis. This chain is Probable chemoreceptor glutamine deamidase CheD, found in Chlorobium luteolum (strain DSM 273 / BCRC 81028 / 2530) (Pelodictyon luteolum).